The sequence spans 93 residues: Acylphosphatase (93 aa).

The Acylphosphatase-like domain occupies 7–93 (CLKAVISGKV…GEFRAFEILR (87 aa)). Catalysis depends on residues Arg22 and Asn40.

It belongs to the acylphosphatase family.

The enzyme catalyses an acyl phosphate + H2O = a carboxylate + phosphate + H(+). This chain is Acylphosphatase (acyP), found in Acaryochloris marina (strain MBIC 11017).